Reading from the N-terminus, the 369-residue chain is GTPase Obg (369 aa).

In terms of domain architecture, Obg spans 1–159 (MKFIDEAKIE…RELRLELKVL (159 aa)). Residues 128 to 148 (IHFKSSTNRAPRQKSEGKEGE) form a disordered region. In terms of domain architecture, OBG-type G spans 160 to 333 (ADIGLLGMPN…LVTEIYDYIA (174 aa)). GTP contacts are provided by residues 166-173 (GMPNAGKS), 191-195 (FTTLH), 213-216 (DIPG), 283-286 (NKLD), and 314-316 (SAL). Mg(2+) contacts are provided by Ser173 and Thr193.

Belongs to the TRAFAC class OBG-HflX-like GTPase superfamily. OBG GTPase family. In terms of assembly, monomer. Mg(2+) is required as a cofactor.

The protein resides in the cytoplasm. Functionally, an essential GTPase which binds GTP, GDP and possibly (p)ppGpp with moderate affinity, with high nucleotide exchange rates and a fairly low GTP hydrolysis rate. Plays a role in control of the cell cycle, stress response, ribosome biogenesis and in those bacteria that undergo differentiation, in morphogenesis control. The protein is GTPase Obg of Herminiimonas arsenicoxydans.